We begin with the raw amino-acid sequence, 327 residues long: tRNA dimethylallyltransferase (327 aa).

14–21 is an ATP binding site; it reads GPTASGKT. 16-21 contributes to the substrate binding site; it reads TASGKT. 2 interaction with substrate tRNA regions span residues 39–42 and 163–167; these read DSAL and QRIQR.

It belongs to the IPP transferase family. As to quaternary structure, monomer. Requires Mg(2+) as cofactor.

The enzyme catalyses adenosine(37) in tRNA + dimethylallyl diphosphate = N(6)-dimethylallyladenosine(37) in tRNA + diphosphate. Catalyzes the transfer of a dimethylallyl group onto the adenine at position 37 in tRNAs that read codons beginning with uridine, leading to the formation of N6-(dimethylallyl)adenosine (i(6)A). This chain is tRNA dimethylallyltransferase, found in Xanthomonas euvesicatoria pv. vesicatoria (strain 85-10) (Xanthomonas campestris pv. vesicatoria).